The chain runs to 120 residues: Photosystem II extrinsic protein U (120 aa).

The signal sequence occupies residues 1–29 (MKRLLSLLTGVLVMTGLLMALIFPQSAYA).

The protein belongs to the PsbU family. As to quaternary structure, PSII is composed of 1 copy each of membrane proteins PsbA, PsbB, PsbC, PsbD, PsbE, PsbF, PsbH, PsbI, PsbJ, PsbK, PsbL, PsbM, PsbT, PsbX, PsbY, Psb30/Ycf12, peripheral proteins PsbO, CyanoQ (PsbQ), PsbU, PsbV and a large number of cofactors. It forms dimeric complexes.

The protein resides in the cellular thylakoid membrane. In terms of biological role, one of the extrinsic, lumenal subunits of photosystem II (PSII). PSII is a light-driven water plastoquinone oxidoreductase, using light energy to abstract electrons from H(2)O, generating a proton gradient subsequently used for ATP formation. The extrinsic proteins stabilize the structure of photosystem II oxygen-evolving complex (OEC), the ion environment of oxygen evolution and protect the OEC against heat-induced inactivation. This Prochlorococcus marinus (strain MIT 9303) protein is Photosystem II extrinsic protein U.